Reading from the N-terminus, the 689-residue chain is Glycine--tRNA ligase beta subunit (689 aa).

It belongs to the class-II aminoacyl-tRNA synthetase family. In terms of assembly, tetramer of two alpha and two beta subunits.

It is found in the cytoplasm. It catalyses the reaction tRNA(Gly) + glycine + ATP = glycyl-tRNA(Gly) + AMP + diphosphate. This chain is Glycine--tRNA ligase beta subunit, found in Salmonella paratyphi A (strain ATCC 9150 / SARB42).